A 329-amino-acid polypeptide reads, in one-letter code: MGLSKTIPLVLLPILMFGVLSNAQLTSDFYSTTCPNVTAIARGLIERASRNDVRLTAKVMRLHFHDCFVNGCDGSVLLDAAPADGVEGEKEAFQNAGSLDGFEVIDDIKTALENVCPGVVSCADILAIAAEISVALAGGPSLDVLLGRRDGRTAIRADAVAALPLGPDSLEILTSKFSVHNLDTTDLVALSGAHTFGRVQCGVINNRLHNFSGNSGQSDPSIEPEFLQTLRRQCPQGGDLTARANLDPTSPDSFDNDYFKNLQNNRGVIESDQILFSSTGAPTVSLVNRFAENQNEFFTNFARSMIKMGNVRILTGREGEIRRDCRRVN.

Positions 1–23 (MGLSKTIPLVLLPILMFGVLSNA) are cleaved as a signal peptide. Disulfide bonds link Cys34–Cys116, Cys67–Cys72, Cys122–Cys325, and Cys201–Cys234. Asn36 is a glycosylation site (N-linked (GlcNAc...) asparagine). Catalysis depends on His65, which acts as the Proton acceptor. 5 residues coordinate Ca(2+): Asp66, Val69, Gly71, Asp73, and Ser75. Substrate is bound at residue Pro164. A heme b-binding site is contributed by His194. Thr195 contributes to the Ca(2+) binding site. Asn210 is a glycosylation site (N-linked (GlcNAc...) asparagine). Ca(2+) is bound by residues Asp247, Ser250, and Asp255.

The protein belongs to the peroxidase family. Classical plant (class III) peroxidase subfamily. The cofactor is heme b. Requires Ca(2+) as cofactor.

The protein resides in the secreted. It carries out the reaction 2 a phenolic donor + H2O2 = 2 a phenolic radical donor + 2 H2O. In terms of biological role, removal of H(2)O(2), oxidation of toxic reductants, biosynthesis and degradation of lignin, suberization, auxin catabolism, response to environmental stresses such as wounding, pathogen attack and oxidative stress. These functions might be dependent on each isozyme/isoform in each plant tissue. The sequence is that of Peroxidase 58 (PER58) from Arabidopsis thaliana (Mouse-ear cress).